The primary structure comprises 364 residues: Protein Bop (364 aa).

Residues Ser66–Ser88 form a disordered region. The BH3 motif lies at Leu114–His128. The disordered stretch occupies residues Gln258 to Phe364. Pro residues-rich tracts occupy residues Ala311 to Pro322 and Pro355 to Phe364.

Interacts (via BH3 domain) with VDAC1. Interacts with pro-survival Bcl-2 family members, BCL2, BCL2L1 isoform Bcl-X(L), MCL1, BCL2A1 and BCL2L2. Interacts with BAX and BAK1. As to expression, ubiquitously expressed.

It is found in the mitochondrion. Its function is as follows. Could induce apoptosis in a BH3 domain-dependent manner. The direct interaction network of Bcl-2 family members may play a key role in modulation RTL10/BOP intrinsic apoptotic signaling activity. The chain is Protein Bop from Homo sapiens (Human).